The sequence spans 968 residues: MSKAELKDFTFKSRHIGPTNEDEALMLQHLGYENSEEFISSVIPNEIFDSENNVVSIPDGCDQNKALKEINIISKKNVEHRSLIGLGYHSTVIPPVIQRNVLENPNWYTAYTPYQAEISQGRLEALFNFQTLISELTGLPISNASLLDEATAAAEAISLSLAVRKNKNANKFLVDQEILPQTFDVLKTRCEPLGISLEMFENNNFEIDKNIFGILIQLPGKNGRIWDPTKIINDAHKCNAIVTIAIDPLAQVLIKPMGEFGADIVVGSAQRFGVPIACGGPHAAFFATKEIYKRQIPGRIVGQSVDVEGNQALRLALQTREQHIRRDKATSNICTAQVLLAVLSSFYAVHHGPKGLKQIAENVVKYRSNFESILMNLEYPIEKYSAFDSVDVYCSEASEVIQLASEEGYNFRVLPIGSDFENAKGFGVTFDELTCDEEIYTLHQILAQVKGKKAHDLSNFLNENASLVDIPLREKSWLEQSVFNQYQSETDLMRYIHSLVSKDFSLVQGMIPLGSCTMKLNSAAELLPIEWREFSSIHPFAPHAQLAGFHEIINDLENWLSALTGFQGVSLQPNAGSQGEFAGLLVIRSWHQSLGEGHRNICLIPTSAHGTNPASAVMSGFKVVSVKCDEYGNVDLEDLKNKSKIHSKNLAALMVTYPSTHGVFEPNIREMCQVIHQEGGQVYLDGANLNAQVGICRPGSYGIDVCHLNLHKTFSIPHGGGGPGVGPIAVADHLVPYLPGHSIIKCGGEKAISAVSAAPFGSAGILPISWMYIRMMGSDGLRKASSIAILSANYLAKRLDPYYPVLFKDPNGLVAHECILDLRPLKSQLGIEVEDVAKRLMDYGFHAPTISWPVAGTLMVEPTESESLPELDRFCDAMIGIREEIEQIKLGKIDPINNPLKQSPHTLKRVTSDDWDRPYSRKEAAYPLPDQEKYKFWPSVSRINNAYGDRNLICSCPSVQDLEDINSV.

Lys-712 carries the post-translational modification N6-(pyridoxal phosphate)lysine.

The protein belongs to the GcvP family. As to quaternary structure, the glycine cleavage system is composed of four proteins: P, T, L and H. Requires pyridoxal 5'-phosphate as cofactor.

It carries out the reaction N(6)-[(R)-lipoyl]-L-lysyl-[glycine-cleavage complex H protein] + glycine + H(+) = N(6)-[(R)-S(8)-aminomethyldihydrolipoyl]-L-lysyl-[glycine-cleavage complex H protein] + CO2. In terms of biological role, the glycine cleavage system catalyzes the degradation of glycine. The P protein binds the alpha-amino group of glycine through its pyridoxal phosphate cofactor; CO(2) is released and the remaining methylamine moiety is then transferred to the lipoamide cofactor of the H protein. The protein is Glycine dehydrogenase (decarboxylating) of Prochlorococcus marinus (strain NATL1A).